We begin with the raw amino-acid sequence, 339 residues long: Phomopsene synthase (339 aa).

Positions 89, 94, 224, 228, and 232 each coordinate Mg(2+).

This sequence belongs to the terpene synthase family. It depends on Mg(2+) as a cofactor.

It carries out the reaction (2E,6E,10E)-geranylgeranyl diphosphate = phomopsene + diphosphate. It catalyses the reaction (2E,6E,10E)-geranylgeranyl diphosphate = allokutznerene + diphosphate. Its pathway is secondary metabolite biosynthesis; terpenoid biosynthesis. In terms of biological role, diterpene synthase that catalyzes the conversion of geranylgeranyl diphosphate (GGPP) to phomopsene, a diterpene previously reported from the fungus P.amygdali. Phomopsene is the main product, but the enzyme can also produce allokutznerene (about 50% of phomopsene production activity) and traces of spiroviolene. Cannot use geranyl diphosphate (GPP), farnesyl diphosphate (FPP) and geranylfarnesyl diphosphate (GFPP). The protein is Phomopsene synthase of Allokutzneria albata (Kibdelosporangium albatum).